Here is a 218-residue protein sequence, read N- to C-terminus: Small ribosomal subunit protein uS3c (218 aa).

The region spanning 39–120 (IRNFMNKELL…IITCKVVGVT (82 aa)) is the KH type-2 domain.

This sequence belongs to the universal ribosomal protein uS3 family. In terms of assembly, part of the 30S ribosomal subunit.

Its subcellular location is the plastid. It localises to the chloroplast. The sequence is that of Small ribosomal subunit protein uS3c (rps3) from Euglena gracilis.